The sequence spans 51 residues: Ovomucoid (51 aa).

The Kazal-like domain occupies 3 to 51; it reads IDCSGYPKPACTLEFFPLCGSDNQTYSNKCAFCNAAVEKNVTLNHIGEC. Intrachain disulfides connect Cys5-Cys35, Cys13-Cys32, and Cys21-Cys51. The N-linked (GlcNAc...) asparagine glycan is linked to Asn42.

It localises to the secreted. The protein is Ovomucoid of Eudromia elegans (Elegant crested-tinamou).